The chain runs to 548 residues: Folylpolyglutamate synthase (548 aa).

Gly130–Ser133 contributes to the ATP binding site. Positions 157, 234, and 262 each coordinate Mg(2+). Arg382 and Asp396 together coordinate ATP.

The protein belongs to the folylpolyglutamate synthase family. A monovalent cation serves as cofactor.

The protein resides in the mitochondrion inner membrane. It localises to the mitochondrion matrix. It is found in the cytoplasm. It carries out the reaction (6S)-5,6,7,8-tetrahydrofolyl-(gamma-L-Glu)(n) + L-glutamate + ATP = (6S)-5,6,7,8-tetrahydrofolyl-(gamma-L-Glu)(n+1) + ADP + phosphate + H(+). The protein operates within cofactor biosynthesis; tetrahydrofolylpolyglutamate biosynthesis. In terms of biological role, catalyzes conversion of folates to polyglutamate derivatives allowing concentration of folate compounds in the cell and the intracellular retention of these cofactors, which are important substrates for most of the folate-dependent enzymes that are involved in one-carbon transfer reactions involved in purine, pyrimidine and amino acid synthesis. Required for methionine synthesis and maintenance of intact mitochondrial DNA. Involved in telomere maintenance. This is Folylpolyglutamate synthase from Saccharomyces cerevisiae (strain AWRI796) (Baker's yeast).